Here is a 285-residue protein sequence, read N- to C-terminus: uncharacterized protein (285 aa).

Residues 1 to 25 are disordered; the sequence is MANQKKKTLPPQHQNQQPGFEYLMD. 45-69 lines the NADP(+) pocket; that stretch reads IITGGDSGIGRAVSVLFAKEGANVV. Substrate is bound at residue S177. The active-site Proton acceptor is Y190.

It belongs to the short-chain dehydrogenases/reductases (SDR) family.

This is an uncharacterized protein from Bacillus subtilis (strain 168).